A 372-amino-acid polypeptide reads, in one-letter code: Hydrogenase-2 small chain (372 aa).

The segment at residues 1–37 (MTGDNTLIHSHGINRRDFMKLCAALAATMGLSSKAAA) is a signal peptide (tat-type signal). [4Fe-4S] cluster contacts are provided by C59, C62, C157, C191, H229, C232, C257, and C263. The [3Fe-4S] cluster site is built by C272, C292, and C295.

It belongs to the [NiFe]/[NiFeSe] hydrogenase small subunit family. Heterodimer of a large and a small subunit. [4Fe-4S] cluster is required as a cofactor. [3Fe-4S] cluster serves as cofactor. In terms of processing, predicted to be exported by the Tat system. The position of the signal peptide cleavage has not been experimentally proven.

It localises to the cell membrane. The protein resides in the periplasm. The enzyme catalyses H2 + A = AH2. This is one of three E.coli hydrogenases synthesized in response to different physiological conditions. HYD2 is involved in hydrogen uptake. This Escherichia coli O157:H7 protein is Hydrogenase-2 small chain (hybO).